The primary structure comprises 147 residues: Protein MC014 (147 aa).

It is found in the host nucleus. This Homo sapiens (Human) protein is Protein MC014 (MC014).